Here is a 238-residue protein sequence, read N- to C-terminus: Zinc import ATP-binding protein ZnuC (238 aa).

Positions 5 to 220 (IQLNNISVNF…SEFIAIFGNI (216 aa)) constitute an ABC transporter domain. ATP is bound at residue 37–44 (GPNGAGKS).

The protein belongs to the ABC transporter superfamily. Zinc importer (TC 3.A.1.15.5) family. As to quaternary structure, the complex is composed of two ATP-binding proteins (ZnuC), two transmembrane proteins (ZnuB) and a solute-binding protein (ZnuA).

The protein resides in the cell membrane. It carries out the reaction Zn(2+)(out) + ATP(in) + H2O(in) = Zn(2+)(in) + ADP(in) + phosphate(in) + H(+)(in). Functionally, part of the ABC transporter complex ZnuABC involved in zinc import. Responsible for energy coupling to the transport system. This chain is Zinc import ATP-binding protein ZnuC, found in Buchnera aphidicola subsp. Baizongia pistaciae (strain Bp).